The following is a 912-amino-acid chain: Eukaryotic translation initiation factor 3 subunit C (912 aa).

Residues 1–44 (MSRFFTTGSDSESESSLSGEELVTKPVGGNYGKQPLLLSEDEED) form a disordered region. Over residues 8-21 (GSDSESESSLSGEE) the composition is skewed to low complexity. Residues Ser9, Ser11, Ser13, Ser15, Ser16, Ser18, and Ser39 each carry the phosphoserine modification. Lys99 carries the N6-acetyllysine modification. 2 disordered regions span residues 157-305 (TNYK…RVRG) and 521-541 (QLTP…NEGE). Phosphoserine is present on residues Ser166, Ser178, Ser181, and Ser182. A compositionally biased stretch (acidic residues) spans 166–190 (SADEDAEKNEEDSEGSSDEDEDDDG). The span at 199-215 (KKSEAPSGDSRKFLKKE) shows a compositional bias: basic and acidic residues. Residues 216–229 (DEDEDSEESEDSEA) are compositionally biased toward acidic residues. Residues 260 to 277 (PTTEEDKKAAEKKREDKA) show a composition bias toward basic and acidic residues. Over residues 521 to 530 (QLTPPEGSSK) the composition is skewed to polar residues. Thr523 bears the Phosphothreonine mark. Lys642 carries the post-translational modification N6-acetyllysine. Positions 672–848 (FHLHINLELL…QTVVMHRTEP (177 aa)) constitute a PCI domain. Residues 884 to 912 (FRDQKDGYRKNEGYMRRGGYRQQQSQTAY) form a disordered region. Residues 885–898 (RDQKDGYRKNEGYM) show a composition bias toward basic and acidic residues. Position 908 is a phosphoserine (Ser908).

This sequence belongs to the eIF-3 subunit C family. Component of the eukaryotic translation initiation factor 3 (eIF-3) complex, which is composed of 13 subunits: EIF3A, EIF3B, EIF3C, EIF3D, EIF3E, EIF3F, EIF3G, EIF3H, EIF3I, EIF3J, EIF3K, EIF3L and EIF3M. The eIF-3 complex appears to include 3 stable modules: module A is composed of EIF3A, EIF3B, EIF3G and EIF3I; module B is composed of EIF3F, EIF3H, and EIF3M; and module C is composed of EIF3C, EIF3D, EIF3E, EIF3K and EIF3L. EIF3C of module C binds EIF3B of module A and EIF3H of module B, thereby linking the three modules. EIF3J is a labile subunit that binds to the eIF-3 complex via EIF3B. The eIF-3 complex interacts with RPS6KB1 under conditions of nutrient depletion. Mitogenic stimulation leads to binding and activation of a complex composed of MTOR and RPTOR, leading to phosphorylation and release of RPS6KB1 and binding of EIF4B to eIF-3. Identified in a HCV IRES-mediated translation complex, at least composed of EIF3C, IGF2BP1, RPS3 and HCV RNA-replicon. Interacts with ALKBH4, IFIT1 and IFIT2. Interacts with BZW2/5MP1. In terms of processing, phosphorylated. Phosphorylation is enhanced upon serum stimulation.

The protein resides in the cytoplasm. Functionally, component of the eukaryotic translation initiation factor 3 (eIF-3) complex, which is required for several steps in the initiation of protein synthesis. The eIF-3 complex associates with the 40S ribosome and facilitates the recruitment of eIF-1, eIF-1A, eIF-2:GTP:methionyl-tRNAi and eIF-5 to form the 43S pre-initiation complex (43S PIC). The eIF-3 complex stimulates mRNA recruitment to the 43S PIC and scanning of the mRNA for AUG recognition. The eIF-3 complex is also required for disassembly and recycling of post-termination ribosomal complexes and subsequently prevents premature joining of the 40S and 60S ribosomal subunits prior to initiation. The eIF-3 complex specifically targets and initiates translation of a subset of mRNAs involved in cell proliferation, including cell cycling, differentiation and apoptosis, and uses different modes of RNA stem-loop binding to exert either translational activation or repression. The chain is Eukaryotic translation initiation factor 3 subunit C from Bos taurus (Bovine).